The sequence spans 573 residues: Splicing factor U2af large subunit A (573 aa).

The disordered stretch occupies residues 1–175 (MSEFEDHEGN…KSKQRVSGFD (175 aa)). A compositionally biased stretch (basic and acidic residues) spans 22 to 93 (NGGRDGEIED…ERSRDKDRDH (72 aa)). Residues 94–105 (RERHHRSSRHRD) are compositionally biased toward basic residues. The span at 106–141 (HSRERGERRERGGRDDDDYRRSRDRDHDRRRDDRGG) shows a compositional bias: basic and acidic residues. The segment covering 159–169 (TRSRSPSKSKQ) has biased composition (basic residues). 3 consecutive RRM domains span residues 239 to 322 (RRVY…RPSD), 359 to 437 (DRIF…RANQ), and 478 to 564 (QVVT…YPED).

This sequence belongs to the splicing factor SR family. As to quaternary structure, component of the spliceosome. Interacts with SUA. Interacts with SF1 in the nucleus.

The protein localises to the nucleus. In terms of biological role, necessary for the splicing of pre-mRNA. This Arabidopsis thaliana (Mouse-ear cress) protein is Splicing factor U2af large subunit A.